The primary structure comprises 100 residues: MAKKSLIYREKKRQKLEKKYHLIRRSSKKEISNIPSLSEKWKIHGKLQSPPRNSAPTRLHRRCFSTGRPRANYRDFGLSGHILREMVHACLLPGATRSSW.

Belongs to the universal ribosomal protein uS14 family. Part of the 30S ribosomal subunit.

It is found in the plastid. The protein localises to the chloroplast. Binds 16S rRNA, required for the assembly of 30S particles. This chain is Small ribosomal subunit protein uS14c, found in Crucihimalaya wallichii (Rock-cress).